A 167-amino-acid polypeptide reads, in one-letter code: Ribosome maturation factor RimM (167 aa).

The 72-residue stretch at E94–L165 folds into the PRC barrel domain.

The protein belongs to the RimM family. Binds ribosomal protein uS19.

Its subcellular location is the cytoplasm. Its function is as follows. An accessory protein needed during the final step in the assembly of 30S ribosomal subunit, possibly for assembly of the head region. Essential for efficient processing of 16S rRNA. May be needed both before and after RbfA during the maturation of 16S rRNA. It has affinity for free ribosomal 30S subunits but not for 70S ribosomes. In Staphylococcus epidermidis (strain ATCC 12228 / FDA PCI 1200), this protein is Ribosome maturation factor RimM.